The following is a 181-amino-acid chain: Protoporphyrinogen IX dehydrogenase [quinone] (181 aa).

In terms of domain architecture, Flavodoxin-like spans 3-172 (TLILFSTRDG…QVANFAREIA (170 aa)). Residues 9-13 (TRDGQ) and 84-152 (FYSV…ETDT) each bind FMN.

This sequence belongs to the HemG family. The cofactor is FMN.

It is found in the cell inner membrane. The enzyme catalyses protoporphyrinogen IX + 3 a menaquinone = protoporphyrin IX + 3 a menaquinol. The catalysed reaction is protoporphyrinogen IX + 3 a ubiquinone = protoporphyrin IX + 3 a ubiquinol. It catalyses the reaction protoporphyrinogen IX + 3 a quinone = protoporphyrin IX + 3 a quinol. Its pathway is porphyrin-containing compound metabolism; protoporphyrin-IX biosynthesis; protoporphyrin-IX from protoporphyrinogen-IX: step 1/1. Its function is as follows. Catalyzes the 6-electron oxidation of protoporphyrinogen IX to form protoporphyrin IX; under anaerobic conditions uses menaquinone as an electron acceptor, under aerobic condition uses ubiquinone as an electron acceptor. The polypeptide is Protoporphyrinogen IX dehydrogenase [quinone] (Escherichia coli O157:H7).